The sequence spans 124 residues: Probable glycine cleavage system H protein (124 aa).

Residues 25–106 (TATIGITDYA…PYGSWLVKMA (82 aa)) enclose the Lipoyl-binding domain. K66 carries the post-translational modification N6-lipoyllysine.

The protein belongs to the GcvH family. In terms of assembly, the glycine cleavage system is composed of four proteins: P, T, L and H. It depends on (R)-lipoate as a cofactor.

In terms of biological role, the glycine cleavage system catalyzes the degradation of glycine. The H protein shuttles the methylamine group of glycine from the P protein to the T protein. The chain is Probable glycine cleavage system H protein from Thermoplasma acidophilum (strain ATCC 25905 / DSM 1728 / JCM 9062 / NBRC 15155 / AMRC-C165).